Here is a 130-residue protein sequence, read N- to C-terminus: Large ribosomal subunit protein uL14 (130 aa).

The protein belongs to the universal ribosomal protein uL14 family. As to quaternary structure, part of the 50S ribosomal subunit. Forms a cluster with proteins L3 and L19. In the 70S ribosome, L14 and L19 interact and together make contacts with the 16S rRNA in bridges B5 and B8.

Binds to 23S rRNA. Forms part of two intersubunit bridges in the 70S ribosome. The protein is Large ribosomal subunit protein uL14 of Helicobacter pylori (strain P12).